The primary structure comprises 825 residues: Zinc finger protein 229 (825 aa).

The disordered stretch occupies residues 1–26; that stretch reads METLTSRHEKRALHSQASAISQDREE. The KRAB domain occupies 34–108; sequence LSFKDVAVVF…SHKELSSCKI (75 aa). A C2H2-type 1; degenerate zinc finger spans residues 291–315; that stretch reads KLCQYDEFSEGLRHSAHLNRHQRVP. 7 consecutive C2H2-type zinc fingers follow at residues 349–371, 377–399, 405–427, 433–455, 461–483, 489–511, and 517–539; these read YRCD…QGVH, YKCE…QRVH, YKCS…QRLH, YTCS…QHIH, YSCG…QKTH, YQCD…QRVH, and YKCN…QRLH. K543 is covalently cross-linked (Glycyl lysine isopeptide (Lys-Gly) (interchain with G-Cter in SUMO2)). C2H2-type zinc fingers lie at residues 545 to 566, 572 to 594, 600 to 622, 628 to 650, 656 to 678, 684 to 706, 712 to 734, 740 to 762, 768 to 790, and 796 to 818; these read YKCE…QRVH, YKCS…QRVH, YVCD…QRVH, YKCA…QRVH, YRCQ…QRVH, YTCD…QRLH, YTCC…KRVH, YRCH…QRVH, and YTCG…QRVH.

It belongs to the krueppel C2H2-type zinc-finger protein family.

The protein localises to the nucleus. In terms of biological role, may be involved in transcriptional regulation. In Homo sapiens (Human), this protein is Zinc finger protein 229.